The sequence spans 406 residues: Corticosteroid-binding globulin (406 aa).

Positions 1 to 22 (MLLTLYACLLWLSTSGLWTSQA) are cleaved as a signal peptide. 3 N-linked (GlcNAc...) asparagine glycosylation sites follow: N95, N119, and N223. Residue Q253 coordinates cortisol. A glycan (N-linked (GlcNAc...) asparagine) is linked at N259. The cortisol site is built by Q285 and W394.

This sequence belongs to the serpin family.

It is found in the secreted. Major transport protein for glucocorticoids and progestins in the blood of almost all vertebrate species. The polypeptide is Corticosteroid-binding globulin (Serpina6) (Sus scrofa (Pig)).